The following is a 251-amino-acid chain: Prolactin-7B1 (251 aa).

A signal peptide spans 1-29; that stretch reads MHLSLTQQCLWPLQILLVSNLLLWENVAA. An N-linked (GlcNAc...) asparagine glycan is attached at N73. Intrachain disulfides connect C100/C216 and C233/C241.

It belongs to the somatotropin/prolactin family.

It localises to the secreted. This chain is Prolactin-7B1 (Prl7b1), found in Rattus norvegicus (Rat).